A 504-amino-acid polypeptide reads, in one-letter code: Protein anon-37Cs (504 aa).

Low levels seen in adult heads, thorax, abdomen and ovaries, high levels in testes.

The protein localises to the cytoplasm. Its function is as follows. Has a non-vital function. The sequence is that of Protein anon-37Cs (anon-37Cs) from Drosophila melanogaster (Fruit fly).